The following is an 86-amino-acid chain: Probable protein BRICK1 (86 aa).

Residues Glu-47 to Asn-81 adopt a coiled-coil conformation.

The protein belongs to the BRK1 family. As to quaternary structure, binds SCAR.

It localises to the cytoplasm. The protein localises to the cytoskeleton. Involved in regulation of actin and microtubule organization. Part of a WAVE complex that activates the Arp2/3 complex. The sequence is that of Probable protein BRICK1 from Oryza sativa subsp. japonica (Rice).